The primary structure comprises 880 residues: Translation initiation factor IF-2 (880 aa).

Disordered regions lie at residues 51–78, 93–116, and 142–293; these read KQHGGESKTKMTLQRKTKSTLNVKGSTG, YVKRSDSETQETQAAELADQQAAN, and KEAD…FEKP. Positions 69–78 are enriched in polar residues; sequence STLNVKGSTG. Over residues 142 to 229 the composition is skewed to basic and acidic residues; that stretch reads KEADEKAKKA…ARKKAAEGGD (88 aa). Positions 269-279 are enriched in basic residues; the sequence is GRRTRRGKKQR. Positions 380 to 549 constitute a tr-type G domain; it reads SRAPVVTIMG…LLQAEMLDLS (170 aa). The interval 389 to 396 is G1; sequence GHVDHGKT. Position 389-396 (389-396) interacts with GTP; sequence GHVDHGKT. Residues 414–418 form a G2 region; that stretch reads GITQH. Positions 435 to 438 are G3; it reads DTPG. GTP-binding positions include 435 to 439 and 489 to 492; these read DTPGH and NKID. The segment at 489–492 is G4; sequence NKID. The interval 525–527 is G5; that stretch reads SAK.

The protein belongs to the TRAFAC class translation factor GTPase superfamily. Classic translation factor GTPase family. IF-2 subfamily.

The protein resides in the cytoplasm. Its function is as follows. One of the essential components for the initiation of protein synthesis. Protects formylmethionyl-tRNA from spontaneous hydrolysis and promotes its binding to the 30S ribosomal subunits. Also involved in the hydrolysis of GTP during the formation of the 70S ribosomal complex. The sequence is that of Translation initiation factor IF-2 from Psychromonas ingrahamii (strain DSM 17664 / CCUG 51855 / 37).